Here is a 1134-residue protein sequence, read N- to C-terminus: RNA-binding protein NAB6 (1134 aa).

At Ser2 the chain carries N-acetylserine. Disordered stretches follow at residues 112–133, 151–173, and 464–491; these read RPVSNHNGYNGNSNSNQNNTNN, RNNNSTRNVTHNNNKGCDTRNNS, and SVPSVTAGNNNDSNNNGNNNKSNMSGIT. Composition is skewed to low complexity over residues 115–133 and 151–164; these read SNHNGYNGNSNSNQNNTNN and RNNNSTRNVTHNNN. A phosphoserine mark is found at Ser464 and Ser467. Over residues 471 to 489 the composition is skewed to low complexity; that stretch reads GNNNDSNNNGNNNKSNMSG. Residues 653 to 726 enclose the RRM domain; sequence RTIYIGNINP…NMLRVGWGHY (74 aa). 2 disordered regions span residues 918 to 959 and 1043 to 1092; these read LDAH…FGGL and NYRS…GSFA. Residues 1057–1081 show a composition bias toward polar residues; the sequence is STLSYNHSKNNETPMQDIFTNGETA. Over residues 1083-1092 the composition is skewed to basic residues; the sequence is NRKKKRGSFA.

It localises to the cytoplasm. RNA-binding protein that associates with mRNAs encoding cell wall proteins. The polypeptide is RNA-binding protein NAB6 (NAB6) (Saccharomyces cerevisiae (strain ATCC 204508 / S288c) (Baker's yeast)).